Here is an 83-residue protein sequence, read N- to C-terminus: UPF0147 protein TK2131 (83 aa).

This sequence belongs to the UPF0147 family.

The sequence is that of UPF0147 protein TK2131 from Thermococcus kodakarensis (strain ATCC BAA-918 / JCM 12380 / KOD1) (Pyrococcus kodakaraensis (strain KOD1)).